The following is a 296-amino-acid chain: Protein TIC 21, chloroplastic (296 aa).

A chloroplast-targeting transit peptide spans 1–90 (MQSLLLPPAS…VAFSYPTSPS (90 aa)). The next 4 helical transmembrane spans lie at 125 to 145 (FWGQLVSTVVAAVILSFSIVV), 156 to 176 (YATASGIAAAFVSVFWSFGYI), 208 to 228 (VNILGMGSALLGMQATVGFLV), and 250 to 270 (VLALDVFLVQASANTLLSHFL).

As to quaternary structure, homomultimer. Part of the translocon complex. In terms of tissue distribution, ubiquitous. Highest expression in green tissues and very low levels in mature pollen.

It is found in the plastid. It localises to the chloroplast inner membrane. Its function is as follows. Involved in chloroplast protein import across the inner envelope membrane. Also acts as a chloroplast permease regulating the iron transport and homeostasis. Involved in the uptake and sequestration of iron in plastids. The chain is Protein TIC 21, chloroplastic (TIC21) from Arabidopsis thaliana (Mouse-ear cress).